The following is a 21-amino-acid chain: Fibrinogen beta chain (21 aa).

Pyrrolidone carboxylic acid is present on Gln1. A compositionally biased stretch (acidic residues) spans Gln1 to Asp11. The disordered stretch occupies residues Gln1–Arg21. Tyr6 is modified (sulfotyrosine). Residues Asp12–Arg21 are compositionally biased toward basic and acidic residues.

Heterohexamer; disulfide linked. Contains 2 sets of 3 non-identical chains (alpha, beta and gamma). The 2 heterotrimers are in head to head conformation with the N-termini in a small central domain. In terms of processing, conversion of fibrinogen to fibrin is triggered by thrombin, which cleaves fibrinopeptides A and B from alpha and beta chains, and thus exposes the N-terminal polymerization sites responsible for the formation of the soft clot.

The protein resides in the secreted. Functionally, cleaved by the protease thrombin to yield monomers which, together with fibrinogen alpha (FGA) and fibrinogen gamma (FGG), polymerize to form an insoluble fibrin matrix. Fibrin has a major function in hemostasis as one of the primary components of blood clots. In addition, functions during the early stages of wound repair to stabilize the lesion and guide cell migration during re-epithelialization. Was originally thought to be essential for platelet aggregation, based on in vitro studies using anticoagulated blood. However subsequent studies have shown that it is not absolutely required for thrombus formation in vivo. Enhances expression of SELP in activated platelets. Maternal fibrinogen is essential for successful pregnancy. Fibrin deposition is also associated with infection, where it protects against IFNG-mediated hemorrhage. May also facilitate the antibacterial immune response via both innate and T-cell mediated pathways. This chain is Fibrinogen beta chain (FGB), found in Antilocapra americana (Pronghorn).